Consider the following 704-residue polypeptide: Zinc finger CCHC domain-containing protein 8 (704 aa).

N-acetylalanine is present on A2. Residues 16–33 (FDHPEESIPEPVHTRFKD) are compositionally biased toward basic and acidic residues. Residues 16 to 43 (FDHPEESIPEPVHTRFKDDDEEDENGVG) are disordered. A coiled-coil region spans residues 43–78 (GDAELRERLRQCEETIEQLRAENQELKRKLNILTRP). The segment at 225 to 242 (PHCFNCGSEEHQMKDCPM) adopts a CCHC-type zinc-finger fold. RBM7 binding regions lie at residues 284–297 (FKPGVISEELQDAL) and 307–322 (FIYRMRQLGYPPGWLK). T340 bears the Phosphothreonine mark. 2 disordered regions span residues 407-516 (APGV…LTLE) and 529-599 (LEQA…SPDC). A Glycyl lysine isopeptide (Lys-Gly) (interchain with G-Cter in SUMO2) cross-link involves residue K411. The span at 454-463 (SQSSESFQFQ) shows a compositional bias: low complexity. The span at 464 to 494 (PPLPPDTPPLPRGTPPPIFTPPLPKGTPPLT) shows a compositional bias: pro residues. A phosphothreonine mark is found at T470, T477, T483, and T490. Positions 514–538 (TLEELEEQQRRIWAALEQAESLNSD) form a coiled coil. Residues 547-557 (LTGNSVASSPC) show a composition bias toward polar residues. T575 bears the Phosphothreonine mark. At S596 the chain carries Phosphoserine. T645 carries the post-translational modification Phosphothreonine. S646, S655, and S692 each carry phosphoserine. The segment at 656-704 (PIPDMSKFATGITPFEFENMAESTGMYLRIRSLLKNSPRNQQKNKKASE) is MTREX binding.

It belongs to the ZCCHC8 family. In terms of assembly, component of a nuclear TRAMP-like complex, an ATP-dependent exosome regulatory complex consisting of a helicase (MTREX), an oligadenylate polymerase (TENT4B or TENT4A), and a substrate specific RNA-binding factor (ZCCHC7 or ZCCHC8). Several TRAMP-like complexes exist with specific compositions and are associated with nuclear, or nucleolar RNA exosomes. Identified in the spliceosome C complex. Component of the nuclear exosome targeting (NEXT) complex composed of MTREX, ZCCHC8, and RBM7 that directs a subset of non-coding short-lived RNAs for exosomal degradation. Interacts with proteins involved in RNA processing and degradation such as MTREX and RBM7; interaction with MTREX enhances MTREX RNA helicase activity and bridges between RBM7 and MTREX. Interacts with TERC, the telomerase RNA component. Phosphorylation at Thr-490 by GSK3 is triggered in cells entering mitosis.

It is found in the nucleus. The protein localises to the nucleoplasm. Its function is as follows. Scaffolding subunit of the trimeric nuclear exosome targeting (NEXT) complex that is involved in the surveillance and turnover of aberrant transcripts and non-coding RNAs. NEXT functions as an RNA exosome cofactor that directs a subset of non-coding short-lived RNAs for exosomal degradation. May be involved in pre-mRNA splicing. It is required for 3'-end maturation of telomerase RNA component (TERC), TERC 3'-end targeting to the nuclear RNA exosome, and for telomerase function. This is Zinc finger CCHC domain-containing protein 8 (ZCCHC8) from Pongo abelii (Sumatran orangutan).